The primary structure comprises 522 residues: MLDNKFGFKQRVASLRWLSAAIMLSVSAVPAWAFSIDDVAQQAEKLAQKGFEAPKSNLPAQFRDMKFADYQQIRFNNDKSYWNNVQTPFKLQFYHQGMYFDTPVKINEVTATTVDEIKYAPEFFDFGPVNHDPESVKNLGFAGFKVLYPINKADKNDEIVSMLGASYFRVVGKGQIYGLSARGLAIDTALPSGEEFPRFREFWIERPKPNDKHLVIYALLDSPRAAGAYRFTVYPGRDSVVDVQAKVFLRDKVGKLGIAPLTSMYLFGPNQPSPTLNYRPALNDSNGLSIHAGNGEWIWRPLNNPKHLSVSTYAVENPKGFGLLQRGRDFTSYEDLDDRYDLRPSGWIEPKGEWGKGKVELVEIPTADETNDNIVAFWTPDVLPETGKPLDVKYRLHFTRDEDQLHSPNIAYVQQTRRSAGDVKQSNLIRQPDGTIAYIVDFIGPNLKELDENAPVASQVSIGDNGEIVENNVRYNPVTHGWRLTLRVRVKDAKQPTEMRAALVNGETTLTETWSNQLPANE.

The signal sequence occupies residues 1–33; that stretch reads MLDNKFGFKQRVASLRWLSAAIMLSVSAVPAWA.

The protein belongs to the OpgD/OpgG family.

It localises to the periplasm. The protein operates within glycan metabolism; osmoregulated periplasmic glucan (OPG) biosynthesis. Involved in the biosynthesis of osmoregulated periplasmic glucans (OPGs). The polypeptide is Glucans biosynthesis protein G (Pectobacterium atrosepticum (strain SCRI 1043 / ATCC BAA-672) (Erwinia carotovora subsp. atroseptica)).